The chain runs to 273 residues: Urease accessory protein UreD (273 aa).

It belongs to the UreD family. As to quaternary structure, ureD, UreF and UreG form a complex that acts as a GTP-hydrolysis-dependent molecular chaperone, activating the urease apoprotein by helping to assemble the nickel containing metallocenter of UreC. The UreE protein probably delivers the nickel.

The protein resides in the cytoplasm. Functionally, required for maturation of urease via the functional incorporation of the urease nickel metallocenter. The protein is Urease accessory protein UreD of Mycolicibacterium gilvum (strain PYR-GCK) (Mycobacterium gilvum (strain PYR-GCK)).